The primary structure comprises 179 residues: MKGFPIAHIFHPSIPPMHAVVNNHNRNIDYWTVKRKFAEIVSTNDVNKIYSISNELRRVLSAITALNFYHGDVPSVMIRIQPENMSPFIIDISTGEHDDYIIQTLDVGTFAPFGEQCTCSAVNKKELECIKETISKYCAKFTRKEAILTPLVHFNKTSITSDCWQILFFSPDHFNNDFY.

This is an uncharacterized protein from Escherichia coli (strain K12).